The chain runs to 166 residues: Phospholipase A2 inhibitor clone 02/03/06/07 (166 aa).

A signal peptide spans 1–19; sequence MRLILLSGLLLLGTFLANG. The 116-residue stretch at 46-161 folds into the C-type lectin domain; that stretch reads LKHAFLTVHK…CDDNLLVVCE (116 aa). 2 disulfide bridges follow: Cys83-Cys160 and Cys138-Cys152. Residue Asn122 is glycosylated (N-linked (GlcNAc...) asparagine).

This sequence belongs to the alpha-type phospholipase A2 inhibitor family. In terms of assembly, homotrimer; non-covalently linked. Expressed by the liver.

The protein localises to the secreted. This phospholipase A2 inhibitor binds directly phospholipase A2 in the presence or absence of calcium. This is Phospholipase A2 inhibitor clone 02/03/06/07 from Lachesis muta muta (Bushmaster).